The chain runs to 166 residues: Urease accessory protein UreE 2 (166 aa).

The disordered stretch occupies residues 133-156 (QPEHGAYGGGHHHSRAGEEDFNYP).

The protein belongs to the UreE family.

It is found in the cytoplasm. Its function is as follows. Involved in urease metallocenter assembly. Binds nickel. Probably functions as a nickel donor during metallocenter assembly. This is Urease accessory protein UreE 2 from Pseudomonas syringae pv. tomato (strain ATCC BAA-871 / DC3000).